The sequence spans 365 residues: Gibberellin 20 oxidase 1-A (365 aa).

The Fe2OG dioxygenase domain maps to 199–299 (GNDSIMRLNY…RKSLAFFLCP (101 aa)). Fe cation contacts are provided by histidine 224, aspartate 226, and histidine 280. Arginine 290 is an active-site residue.

This sequence belongs to the iron/ascorbate-dependent oxidoreductase family. GA20OX subfamily. Fe cation serves as cofactor. Requires L-ascorbate as cofactor. In terms of tissue distribution, expressed in nodes and the ear of the elongating stem.

The enzyme catalyses gibberellin A12 + 2 2-oxoglutarate + 3 O2 + H(+) = gibberellin A9 + 2 succinate + 3 CO2 + 2 H2O. It catalyses the reaction gibberellin A53 + 2 2-oxoglutarate + 3 O2 + H(+) = gibberellin A20 + 2 succinate + 3 CO2 + 2 H2O. Key oxidase enzyme in the biosynthesis of gibberellin that catalyzes the conversion of GA12 and GA53 to GA9 and GA20 respectively, via a three-step oxidation at C-20 of the GA skeleton. This is Gibberellin 20 oxidase 1-A (GA20ox1A) from Triticum aestivum (Wheat).